Consider the following 206-residue polypeptide: MAQTPLRIGIAGPVGSGKTALLEALCKALRQKYQLAVVTNDIYTQEDAQFLVRAEALTPDRILGVETGGCPHTAIREDASLNLAAIADLEARFMPLDMVFLESGGDNLAATFSPELVDLTLYVIDVAAGDKIPRKGGPGITKSDLLVINKIDLAPMVGADLGIMDRDAKKMRGEKPFVFTNLKTATGLSTVVDFVEHYLPTKVLAS.

12–19 lines the GTP pocket; the sequence is GPVGSGKT.

The protein belongs to the SIMIBI class G3E GTPase family. UreG subfamily. Homodimer. UreD, UreF and UreG form a complex that acts as a GTP-hydrolysis-dependent molecular chaperone, activating the urease apoprotein by helping to assemble the nickel containing metallocenter of UreC. The UreE protein probably delivers the nickel.

Its subcellular location is the cytoplasm. Functionally, facilitates the functional incorporation of the urease nickel metallocenter. This process requires GTP hydrolysis, probably effectuated by UreG. This Synechocystis sp. (strain ATCC 27184 / PCC 6803 / Kazusa) protein is Urease accessory protein UreG.